The primary structure comprises 111 residues: Magnetosome protein MamF (111 aa).

The Cytoplasmic segment spans residues 1 to 17 (MAETILIETKTAGGNCR). The helical transmembrane segment at 18–38 (SYLMAGASYLGILCFVPLLMS) threads the bilayer. The Lumenal segment spans residues 39–50 (RDDEYVYFHAKQ). A helical transmembrane segment spans residues 51–71 (GLVLWMWSILAMFALHLPGIG). Position 72 (K72) is a topological domain, cytoplasmic. A helical membrane pass occupies residues 73–93 (WLFGFSSMGVLMLSVVGLVSV). The Lumenal portion of the chain corresponds to 94 to 111 (ALRRTWRLPLISHVVALI).

It belongs to the magnetosome MamF/MmsF protein family. As to quaternary structure, may form homooligomers. Post-translationally, subject to cleavage or degradation; identified by N-terminal sequencing of proteins that are about 103, 92 and 15 kDa in size.

The protein localises to the magnetosome membrane. Plays a role in regulating magnetite crystal size; partially redundant function with MmsF. The chain is Magnetosome protein MamF from Magnetospirillum gryphiswaldense (strain DSM 6361 / JCM 21280 / NBRC 15271 / MSR-1).